The sequence spans 209 residues: Scoloptoxin SSD346 (209 aa).

The N-terminal stretch at 1-22 (NILLSSTLFVLLMFQIIGSGLG) is a signal peptide.

Contains 2 disulfide bonds. Expressed by the venom gland.

The protein localises to the secreted. In terms of biological role, may act as a voltage-gated calcium channel inhibitor. This is Scoloptoxin SSD346 from Scolopendra dehaani (Thai centipede).